The primary structure comprises 199 residues: NAD(P)H dehydrogenase (quinone) (199 aa).

Residues 4-190 (MLVLYYSAYG…DGARFQGRRV (187 aa)) enclose the Flavodoxin-like domain. Residues 10 to 15 (SAYGHM) and 78 to 80 (TRY) each bind FMN. Tyr12 is a binding site for NAD(+). Residue Trp98 participates in substrate binding. FMN contacts are provided by residues 113–119 (STATQYG) and His134. The segment at 162–181 (GMTTTADGDGSRQPSAQELD) is disordered. Over residues 163 to 177 (MTTTADGDGSRQPSA) the composition is skewed to polar residues.

Belongs to the WrbA family. Requires FMN as cofactor.

It catalyses the reaction a quinone + NADH + H(+) = a quinol + NAD(+). The catalysed reaction is a quinone + NADPH + H(+) = a quinol + NADP(+). The chain is NAD(P)H dehydrogenase (quinone) from Brucella suis (strain ATCC 23445 / NCTC 10510).